The following is a 239-amino-acid chain: ATP-dependent dethiobiotin synthetase BioD (239 aa).

ATP is bound at residue 13–18; it reads EIGKTV. Position 17 (threonine 17) interacts with Mg(2+). The active site involves lysine 38. A substrate-binding site is contributed by threonine 42. Residues lysine 59 and glutamate 111 each contribute to the Mg(2+) site. ATP-binding positions include 111–114, 175–176, and 204–206; these read EGAG, NQ, and PSL.

It belongs to the dethiobiotin synthetase family. As to quaternary structure, homodimer. Mg(2+) serves as cofactor.

It is found in the cytoplasm. The catalysed reaction is (7R,8S)-7,8-diammoniononanoate + CO2 + ATP = (4R,5S)-dethiobiotin + ADP + phosphate + 3 H(+). Its pathway is cofactor biosynthesis; biotin biosynthesis; biotin from 7,8-diaminononanoate: step 1/2. Its function is as follows. Catalyzes a mechanistically unusual reaction, the ATP-dependent insertion of CO2 between the N7 and N8 nitrogen atoms of 7,8-diaminopelargonic acid (DAPA, also called 7,8-diammoniononanoate) to form a ureido ring. The protein is ATP-dependent dethiobiotin synthetase BioD of Geobacillus sp. (strain WCH70).